A 537-amino-acid chain; its full sequence is Tyrosine-protein kinase Fyn (537 aa).

Glycine 2 carries the N-myristoyl glycine lipid modification. S-palmitoyl cysteine attachment occurs at residues cysteine 3 and cysteine 6. Position 12 is a phosphothreonine; by PKC (threonine 12). The segment at 14–35 (LTEERDGSLNQSSGYRYGTDPT) is disordered. 2 positions are modified to phosphoserine: serine 21 and serine 26. One can recognise an SH3 domain in the interval 82-143 (TGVTLFVALY…PSNYVAPVDS (62 aa)). The SH2 domain maps to 149 to 246 (WYFGKLGRKD…GLCCRLVVPC (98 aa)). Tyrosine 185 is modified (phosphotyrosine). Residues 271–524 (LQLIKRLGNG…YLQGFLEDYF (254 aa)) enclose the Protein kinase domain. ATP is bound by residues 277–285 (LGNGQFGEV) and lysine 299. Aspartate 390 functions as the Proton acceptor in the catalytic mechanism. Tyrosine 420 carries the phosphotyrosine; by autocatalysis modification. Tyrosine 531 is subject to Phosphotyrosine; by CSK.

The protein belongs to the protein kinase superfamily. Tyr protein kinase family. SRC subfamily. As to quaternary structure, interacts (via its SH3 domain) with PIK3R1 and PRMT8. Interacts with FYB1, PAG1, and SH2D1A. Interacts with CD79A (tyrosine-phosphorylated form); the interaction increases FYN activity. Interacts (via SH2 domain) with CSF1R (tyrosine phosphorylated). Interacts with TOM1L1 (phosphorylated form). Interacts with KDR (tyrosine phosphorylated). Interacts (via SH3 domain) with KLHL2 (via N-terminus). Interacts with SH2D1A and SLAMF1. Interacts with ITCH; the interaction phosphorylates ITCH and negatively regulates its activity. Interacts with FASLG. Interacts with RUNX3. Interacts with KIT. Interacts with EPHA8; possible downstream effector of EPHA8 in regulation of cell adhesion. Interacts with PTK2/FAK1; this interaction leads to PTK2/FAK1 phosphorylation and activation. Interacts with CAV1; this interaction couples integrins to the Ras-ERK pathway. Interacts with UNC119. Interacts (via SH2 domain) with PTPRH (phosphorylated form). Interacts with PTPRO (phosphorylated form). Interacts with PTPRB (phosphorylated form). Interacts with FYB2. Interacts with DSCAM. Interacts with SKAP1 and FYB1; this interaction promotes the phosphorylation of CLNK. Interacts with NEDD9; in the presence of PTK2. Mn(2+) is required as a cofactor. In terms of processing, autophosphorylated at Tyr-420. Phosphorylation on the C-terminal tail at Tyr-531 by CSK maintains the enzyme in an inactive state. PTPRC/CD45 dephosphorylates Tyr-531 leading to activation. Ultraviolet B (UVB) strongly increase phosphorylation at Thr-12 and kinase activity, and promotes translocation from the cytoplasm to the nucleus. Dephosphorylation at Tyr-420 by PTPN2 negatively regulates T-cell receptor signaling. Phosphorylated at tyrosine residues, which can be enhanced by NTN1. Post-translationally, palmitoylated. Palmitoylation at Cys-3 and Cys-6, probably by ZDHHC21, regulates subcellular location.

It localises to the cytoplasm. The protein resides in the nucleus. Its subcellular location is the cell membrane. It is found in the perikaryon. It catalyses the reaction L-tyrosyl-[protein] + ATP = O-phospho-L-tyrosyl-[protein] + ADP + H(+). Its activity is regulated as follows. Inhibited by phosphorylation of Tyr-531 by leukocyte common antigen and activated by dephosphorylation of this site. Its function is as follows. Non-receptor tyrosine-protein kinase that plays a role in many biological processes including regulation of cell growth and survival, cell adhesion, integrin-mediated signaling, cytoskeletal remodeling, cell motility, immune response and axon guidance. Inactive FYN is phosphorylated on its C-terminal tail within the catalytic domain. Following activation by PKA, the protein subsequently associates with PTK2/FAK1, allowing PTK2/FAK1 phosphorylation, activation and targeting to focal adhesions. Involved in the regulation of cell adhesion and motility through phosphorylation of CTNNB1 (beta-catenin) and CTNND1 (delta-catenin). Regulates cytoskeletal remodeling by phosphorylating several proteins including the actin regulator WAS and the microtubule-associated proteins MAP2 and MAPT. Promotes cell survival by phosphorylating AGAP2/PIKE-A and preventing its apoptotic cleavage. Participates in signal transduction pathways that regulate the integrity of the glomerular slit diaphragm (an essential part of the glomerular filter of the kidney) by phosphorylating several slit diaphragm components including NPHS1, KIRREL1 and TRPC6. Plays a role in neural processes by phosphorylating DPYSL2, a multifunctional adapter protein within the central nervous system, ARHGAP32, a regulator for Rho family GTPases implicated in various neural functions, and SNCA, a small pre-synaptic protein. Involved in reelin signaling by mediating phosphorylation of DAB1 following reelin (RELN)-binding to its receptor. Participates in the downstream signaling pathways that lead to T-cell differentiation and proliferation following T-cell receptor (TCR) stimulation. Phosphorylates PTK2B/PYK2 in response to T-cell receptor activation. Also participates in negative feedback regulation of TCR signaling through phosphorylation of PAG1, thereby promoting interaction between PAG1 and CSK and recruitment of CSK to lipid rafts. CSK maintains LCK and FYN in an inactive form. Promotes CD28-induced phosphorylation of VAV1. In mast cells, phosphorylates CLNK after activation of immunoglobulin epsilon receptor signaling. Can also promote CD244-mediated NK cell activation. This Bos taurus (Bovine) protein is Tyrosine-protein kinase Fyn.